Reading from the N-terminus, the 200-residue chain is Recombination protein RecR (200 aa).

A C4-type zinc finger spans residues 57-72; that stretch reads CDSCQNFSDTEICQIC. Residues 80-175 form the Toprim domain; sequence GTLCVVESPS…LITRLAHGIP (96 aa).

This sequence belongs to the RecR family.

Its function is as follows. May play a role in DNA repair. It seems to be involved in an RecBC-independent recombinational process of DNA repair. It may act with RecF and RecO. This is Recombination protein RecR from Marinobacter nauticus (strain ATCC 700491 / DSM 11845 / VT8) (Marinobacter aquaeolei).